Reading from the N-terminus, the 635-residue chain is Bifunctional lysine-specific demethylase and histidyl-hydroxylase NO66 (635 aa).

Disordered stretches follow at residues 1–115 (MSAV…LQNS) and 141–190 (FNGE…KANG). Positions 84–99 (ASASDINTSASKNVNA) are enriched in low complexity. A compositionally biased stretch (polar residues) spans 141 to 156 (FNGESLKNNSNHSTPV). A JmjC domain is found at 295 to 440 (CSIRMLNPQT…DLLELFFPHA (146 aa)). Residues H341, D343, and H406 each contribute to the Fe cation site.

Belongs to the ROX family. NO66 subfamily. Fe(2+) is required as a cofactor.

The protein localises to the nucleus. The enzyme catalyses N(6),N(6)-dimethyl-L-lysyl(36)-[histone H3] + 2 2-oxoglutarate + 2 O2 = L-lysyl(36)-[histone H3] + 2 formaldehyde + 2 succinate + 2 CO2. Its function is as follows. Oxygenase that can act as both a histone lysine demethylase and a ribosomal histidine hydroxylase. Specifically demethylates 'Lys-4' (H3K4me) and 'Lys-36' (H3K36me) of histone H3, thereby playing a central role in histone code. The polypeptide is Bifunctional lysine-specific demethylase and histidyl-hydroxylase NO66 (Aedes aegypti (Yellowfever mosquito)).